Reading from the N-terminus, the 27-residue chain is Potassium channel toxin alpha-KTx 9.11 (27 aa).

Cystine bridges form between C3/C19, C6/C23, and C10/C25.

It belongs to the short scorpion toxin superfamily. Potassium channel inhibitor family. Alpha-KTx 09 subfamily. As to expression, expressed by the venom gland.

Its subcellular location is the secreted. Its function is as follows. May play a role in blocking voltage-gated potassium channels Kv1.2/KCNA2, Kv1.3/KCNA3 and Kv1.6/KCNA6 to a lesser extent. This is Potassium channel toxin alpha-KTx 9.11 from Mesobuthus gibbosus (Mediterranean checkered scorpion).